Consider the following 312-residue polypeptide: MKIGVICGGLSSEREVSLRTGDAIFRALLKKGYNVVKIDMDRNIAETLKKENIDFAFIALHGKYGEDGAIQGLLEIMDIPYTGSGILASSLAIDKIMTKKILKAEGIPTPNYIAFSFDENPNFEAISSEILQTLKLPVVIKAPREGSTIGIEFVFSKQELPKAIKKVLEIDKQLLVEEFIEGVEVTASVLGNSNPVVLPLIEIVSKTRFYDYEAKYTPGLSEHIIPPRIAPELSQKAIEYARKTYKALGCRGFARVDFMIDVRKNEAYVLEVNTIPGMTATSLFPDAAKAQGISFEDLVEKILMLGLEGRQK.

The ATP-grasp domain maps to 99–304 (KKILKAEGIP…FEDLVEKILM (206 aa)). 131-186 (LQTLKLPVVIKAPREGSTIGIEFVFSKQELPKAIKKVLEIDKQLLVEEFIEGVEVT) is an ATP binding site. Residues Asp257, Glu271, and Asn273 each coordinate Mg(2+).

It belongs to the D-alanine--D-alanine ligase family. The cofactor is Mg(2+). It depends on Mn(2+) as a cofactor.

The protein resides in the cytoplasm. It carries out the reaction 2 D-alanine + ATP = D-alanyl-D-alanine + ADP + phosphate + H(+). Its pathway is cell wall biogenesis; peptidoglycan biosynthesis. Functionally, cell wall formation. The polypeptide is D-alanine--D-alanine ligase (Carboxydothermus hydrogenoformans (strain ATCC BAA-161 / DSM 6008 / Z-2901)).